Here is a 308-residue protein sequence, read N- to C-terminus: Porphobilinogen deaminase (308 aa).

At Cys241 the chain carries S-(dipyrrolylmethanemethyl)cysteine.

The protein belongs to the HMBS family. As to quaternary structure, monomer. The cofactor is dipyrromethane.

It carries out the reaction 4 porphobilinogen + H2O = hydroxymethylbilane + 4 NH4(+). The protein operates within porphyrin-containing compound metabolism; protoporphyrin-IX biosynthesis; coproporphyrinogen-III from 5-aminolevulinate: step 2/4. Its function is as follows. Tetrapolymerization of the monopyrrole PBG into the hydroxymethylbilane pre-uroporphyrinogen in several discrete steps. In Staphylococcus aureus (strain MSSA476), this protein is Porphobilinogen deaminase.